Reading from the N-terminus, the 537-residue chain is Protein swallow (537 aa).

The tract at residues 344–406 (QPNAGKPKKN…SESSHPSSND (63 aa)) is disordered. Low complexity-rich tracts occupy residues 371–383 (NGNGTTSTGHSSS) and 392–406 (AAPNNSESSHPSSND).

In terms of assembly, may be constituted of a homo- or heterodimer.

Its subcellular location is the nucleus. Its function is as follows. Has a role in localizing bicoid mRNA at the anterior margin of the oocyte during oogenesis, and a poorly characterized role in nuclear divisions in early embryogenesis. The chain is Protein swallow (swa) from Drosophila pseudoobscura pseudoobscura (Fruit fly).